The chain runs to 478 residues: Glutamate--tRNA ligase (478 aa).

Residues 23–33 (PSPTGFIHLGN) carry the 'HIGH' region motif. Over residues 130 to 145 (KQKPRYDGTWRPEEGK) the composition is skewed to basic and acidic residues. Positions 130–153 (KQKPRYDGTWRPEEGKTLPPVPEG) are disordered. A 'KMSKS' region motif is present at residues 255-259 (KMSKR). ATP is bound at residue Lys-258.

The protein belongs to the class-I aminoacyl-tRNA synthetase family. Glutamate--tRNA ligase type 1 subfamily. As to quaternary structure, monomer.

The protein localises to the cytoplasm. The catalysed reaction is tRNA(Glu) + L-glutamate + ATP = L-glutamyl-tRNA(Glu) + AMP + diphosphate. Catalyzes the attachment of glutamate to tRNA(Glu) in a two-step reaction: glutamate is first activated by ATP to form Glu-AMP and then transferred to the acceptor end of tRNA(Glu). In Paracidovorax citrulli (strain AAC00-1) (Acidovorax citrulli), this protein is Glutamate--tRNA ligase.